Here is a 416-residue protein sequence, read N- to C-terminus: Hepatic and glial cell adhesion molecule (416 aa).

The N-terminal stretch at 1 to 33 is a signal peptide; it reads MKRERGALSRASRALRLAPFVYLLLIQTDPLEG. An Ig-like V-type domain is found at 34 to 142; it reads VNITSPVRLI…GEKTINLTVD (109 aa). Residues 34–240 are Extracellular-facing; that stretch reads VNITSPVRLI…VKITVYRRSS (207 aa). N-linked (GlcNAc...) asparagine glycans are attached at residues N35, N138, N167, and N189. Positions 148-234 constitute an Ig-like C2-type domain; the sequence is PQVLVASTTV…QGRSLPVKIT (87 aa). A disulfide bridge links C168 with C217. A helical membrane pass occupies residues 241 to 261; sequence LYIILSTGGIFLLVTLVTVCA. The Cytoplasmic portion of the chain corresponds to 262–416; it reads CWKPSKRKQK…DEAGPVEISA (155 aa). The tract at residues 273–416 is disordered; that stretch reads LEKQNSLEYM…DEAGPVEISA (144 aa). S278 carries the post-translational modification Phosphoserine. Residues 285–306 show a composition bias toward basic and acidic residues; the sequence is NDDRLKPEADTLPRSGEQERKN. 2 positions are modified to phosphoserine: S350 and S377. The segment covering 383-398 has biased composition (low complexity); it reads SSPGRSRSASRTLRTA.

As to quaternary structure, homodimer. Dimer formation occurs predominantly through cis interactions on the cell surface. Part of a complex containing MLC1, TRPV4, AQP4 and ATP1B1. Interacts with CLCN2. Post-translationally, N-glycosylated.

It localises to the cytoplasm. The protein resides in the cell membrane. Its function is as follows. Involved in regulating cell motility and cell-matrix interactions. May inhibit cell growth through suppression of cell proliferation. In glia, associates and targets CLCN2 at astrocytic processes and myelinated fiber tracts where it may regulate transcellular chloride flux involved in neuron excitability. The protein is Hepatic and glial cell adhesion molecule of Homo sapiens (Human).